The primary structure comprises 135 residues: Histone H3 type 1 (135 aa).

The interval 1-40 (MARTKQTARKSTGGKAPRKQLATKAARKTPATGGVKKPHR) is disordered. Residue Lys5 is modified to N6-methyllysine. Residue Lys10 is modified to N6-acetyllysine; alternate. Residue Lys10 is modified to N6-methyllysine; alternate. Ser11 carries the phosphoserine modification. Residue Thr12 is modified to Phosphothreonine. N6-acetyllysine occurs at positions 15, 19, and 24. Lys28 carries the N6-acetyllysine; alternate modification. Lys28 carries the post-translational modification N6-methyllysine; alternate. Lys36 and Lys37 each carry N6-methyllysine.

This sequence belongs to the histone H3 family. In terms of assembly, the nucleosome is a histone octamer containing two molecules each of H2A, H2B, H3 and H4 assembled in one H3-H4 heterotetramer and two H2A-H2B heterodimers. The octamer wraps approximately 147 bp of DNA. Acetylation is generally linked to gene activation. Acetylated to form H3K9ac (11%), H3K14ac (17%), H3K18ac (11%), H3K23ac (16%) and H3K27ac (7%). H3K4, H3K35 and H3K36 are not acetylated. H3K4me prevents acetylation. 32% of the histone H3 are acetylated with, on average, 2.4 acetyl-Lys. They are all continuously deacatylated and re-acetylated with a half-life of approximately 2 minutes. In terms of processing, monomethylated to form H3K4me1 (81%), H3K9me1 (16%), H3K27me1 (25%), H3K35me1 (25%) and H3K36me1 (5%). No methylation at H3K14, H3K18 and H3K23. Methylated by a protein complex that includes Mut11. Set1 methylates specifically H3K4. H3K4me1 is associated with silenced euchromatin. Set3 forms H3K9me1, while H3K9me2 is undetected. H3K9me1 is specifically associated with silent, multi-copy transgenes. Post-translationally, no phosphorylation detected.

The protein localises to the nucleus. It is found in the chromosome. Functionally, core component of nucleosome. Nucleosomes wrap and compact DNA into chromatin, limiting DNA accessibility to the cellular machineries which require DNA as a template. Histones thereby play a central role in transcription regulation, DNA repair, DNA replication and chromosomal stability. DNA accessibility is regulated via a complex set of post-translational modifications of histones, also called histone code, and nucleosome remodeling. This is Histone H3 type 1 (ch3-I) from Chlamydomonas reinhardtii (Chlamydomonas smithii).